We begin with the raw amino-acid sequence, 677 residues long: Methionine--tRNA ligase (677 aa).

Residues 15-25 (PYANGSIHLGH) carry the 'HIGH' region motif. The Zn(2+) site is built by Cys-146, Cys-149, Cys-159, and Cys-162. Residues 333–337 (KMSKS) carry the 'KMSKS' region motif. Residue Lys-336 coordinates ATP. One can recognise a tRNA-binding domain in the interval 575-677 (DFAKVDLRVA…AGAKPGHQVK (103 aa)).

Belongs to the class-I aminoacyl-tRNA synthetase family. MetG type 1 subfamily. As to quaternary structure, homodimer. Requires Zn(2+) as cofactor.

The protein resides in the cytoplasm. It catalyses the reaction tRNA(Met) + L-methionine + ATP = L-methionyl-tRNA(Met) + AMP + diphosphate. Is required not only for elongation of protein synthesis but also for the initiation of all mRNA translation through initiator tRNA(fMet) aminoacylation. The sequence is that of Methionine--tRNA ligase from Escherichia fergusonii (strain ATCC 35469 / DSM 13698 / CCUG 18766 / IAM 14443 / JCM 21226 / LMG 7866 / NBRC 102419 / NCTC 12128 / CDC 0568-73).